The following is a 380-amino-acid chain: Queuine tRNA-ribosyltransferase (380 aa).

Asp-95 acts as the Proton acceptor in catalysis. Substrate contacts are provided by residues 95-99, Asp-149, Gln-192, and Gly-219; that span reads DSGGF. The interval 250–256 is RNA binding; it reads GVGSADA. Asp-269 serves as the catalytic Nucleophile. Residues 274–278 form an RNA binding; important for wobble base 34 recognition region; sequence TRIAR. Residues Cys-307, Cys-309, Cys-312, and His-338 each contribute to the Zn(2+) site.

The protein belongs to the queuine tRNA-ribosyltransferase family. Homodimer. Within each dimer, one monomer is responsible for RNA recognition and catalysis, while the other monomer binds to the replacement base PreQ1. The cofactor is Zn(2+).

The enzyme catalyses 7-aminomethyl-7-carbaguanine + guanosine(34) in tRNA = 7-aminomethyl-7-carbaguanosine(34) in tRNA + guanine. It participates in tRNA modification; tRNA-queuosine biosynthesis. Its function is as follows. Catalyzes the base-exchange of a guanine (G) residue with the queuine precursor 7-aminomethyl-7-deazaguanine (PreQ1) at position 34 (anticodon wobble position) in tRNAs with GU(N) anticodons (tRNA-Asp, -Asn, -His and -Tyr). Catalysis occurs through a double-displacement mechanism. The nucleophile active site attacks the C1' of nucleotide 34 to detach the guanine base from the RNA, forming a covalent enzyme-RNA intermediate. The proton acceptor active site deprotonates the incoming PreQ1, allowing a nucleophilic attack on the C1' of the ribose to form the product. After dissociation, two additional enzymatic reactions on the tRNA convert PreQ1 to queuine (Q), resulting in the hypermodified nucleoside queuosine (7-(((4,5-cis-dihydroxy-2-cyclopenten-1-yl)amino)methyl)-7-deazaguanosine). This is Queuine tRNA-ribosyltransferase from Lactiplantibacillus plantarum (strain ATCC BAA-793 / NCIMB 8826 / WCFS1) (Lactobacillus plantarum).